A 326-amino-acid polypeptide reads, in one-letter code: Undecaprenyl-phosphate 4-deoxy-4-formamido-L-arabinose transferase (326 aa).

A run of 2 helical transmembrane segments spans residues 235-255 (MLSVIGSMIALLGFAFSLLLI) and 270-290 (VFMLFAVLFIFIGAQFIGMGL).

The protein belongs to the glycosyltransferase 2 family.

Its subcellular location is the cell inner membrane. The enzyme catalyses UDP-4-deoxy-4-formamido-beta-L-arabinose + di-trans,octa-cis-undecaprenyl phosphate = 4-deoxy-4-formamido-alpha-L-arabinopyranosyl di-trans,octa-cis-undecaprenyl phosphate + UDP. Its pathway is glycolipid biosynthesis; 4-amino-4-deoxy-alpha-L-arabinose undecaprenyl phosphate biosynthesis; 4-amino-4-deoxy-alpha-L-arabinose undecaprenyl phosphate from UDP-4-deoxy-4-formamido-beta-L-arabinose and undecaprenyl phosphate: step 1/2. It participates in bacterial outer membrane biogenesis; lipopolysaccharide biosynthesis. Its function is as follows. Catalyzes the transfer of 4-deoxy-4-formamido-L-arabinose from UDP to undecaprenyl phosphate. The modified arabinose is attached to lipid A and is required for resistance to polymyxin and cationic antimicrobial peptides. The polypeptide is Undecaprenyl-phosphate 4-deoxy-4-formamido-L-arabinose transferase (Sodalis glossinidius (strain morsitans)).